The chain runs to 301 residues: Glycine--tRNA ligase alpha subunit (301 aa).

It belongs to the class-II aminoacyl-tRNA synthetase family. In terms of assembly, tetramer of two alpha and two beta subunits.

The protein localises to the cytoplasm. The catalysed reaction is tRNA(Gly) + glycine + ATP = glycyl-tRNA(Gly) + AMP + diphosphate. The sequence is that of Glycine--tRNA ligase alpha subunit from Actinobacillus pleuropneumoniae serotype 5b (strain L20).